Here is a 69-residue protein sequence, read N- to C-terminus: MAQDLSEKDLLKMEVEQLKKEVKNTRIPISKAGKEIKEYVEAQAGNDPFLKGIPEDKNPFKEKGGCLIS.

Position 66 is a cysteine methyl ester (Cys66). The S-farnesyl cysteine moiety is linked to residue Cys66. A propeptide spans 67 to 69 (LIS) (removed in mature form).

This sequence belongs to the G protein gamma family. In terms of assembly, g proteins are composed of 3 units, alpha, beta and gamma. Retinal cones.

Its subcellular location is the cell membrane. Its function is as follows. Guanine nucleotide-binding proteins (G proteins) are involved as a modulator or transducer in various transmembrane signaling systems. The beta and gamma chains are required for the GTPase activity, for replacement of GDP by GTP, and for G protein-effector interaction. In Homo sapiens (Human), this protein is Guanine nucleotide-binding protein G(I)/G(S)/G(O) subunit gamma-T2 (GNGT2).